We begin with the raw amino-acid sequence, 206 residues long: Dephospho-CoA kinase (206 aa).

The DPCK domain maps to 4–200 (IVALTGGIGS…AHYLQLASQF (197 aa)). 12 to 17 (GSGKST) lines the ATP pocket.

The protein belongs to the CoaE family.

The protein resides in the cytoplasm. It carries out the reaction 3'-dephospho-CoA + ATP = ADP + CoA + H(+). The protein operates within cofactor biosynthesis; coenzyme A biosynthesis; CoA from (R)-pantothenate: step 5/5. Catalyzes the phosphorylation of the 3'-hydroxyl group of dephosphocoenzyme A to form coenzyme A. This is Dephospho-CoA kinase from Shigella flexneri.